The chain runs to 150 residues: U1 small nuclear ribonucleoprotein C (150 aa).

The segment at 4–36 (YYCDYCKSYLTHDTMSVRKSHLQGRNHIKFYCD) adopts a Matrin-type zinc-finger fold. The tract at residues 66–127 (SDAKKSNGSS…PPNLSGLPLP (62 aa)) is disordered. The segment covering 80–92 (DIDKKENSSDHNK) has biased composition (basic and acidic residues). Residues 103 to 112 (NDNDDDDDEM) show a composition bias toward acidic residues.

Belongs to the U1 small nuclear ribonucleoprotein C family. As to quaternary structure, U1 snRNP is composed of the 7 core Sm proteins B/B', D1, D2, D3, E, F and G that assemble in a heptameric protein ring on the Sm site of the small nuclear RNA to form the core snRNP, and at least 3 U1 snRNP-specific proteins U1-70K, U1-A and U1-C. U1-C interacts with U1 snRNA and the 5' splice-site region of the pre-mRNA.

The protein resides in the nucleus. Component of the spliceosomal U1 snRNP, which is essential for recognition of the pre-mRNA 5' splice-site and the subsequent assembly of the spliceosome. U1-C is directly involved in initial 5' splice-site recognition for both constitutive and regulated alternative splicing. The interaction with the 5' splice-site seems to precede base-pairing between the pre-mRNA and the U1 snRNA. Stimulates commitment or early (E) complex formation by stabilizing the base pairing of the 5' end of the U1 snRNA and the 5' splice-site region. In Candida albicans (strain WO-1) (Yeast), this protein is U1 small nuclear ribonucleoprotein C.